Reading from the N-terminus, the 273-residue chain is 2-dehydro-3-deoxyphosphooctonate aldolase (273 aa).

The protein belongs to the KdsA family.

The protein localises to the cytoplasm. The catalysed reaction is D-arabinose 5-phosphate + phosphoenolpyruvate + H2O = 3-deoxy-alpha-D-manno-2-octulosonate-8-phosphate + phosphate. It participates in carbohydrate biosynthesis; 3-deoxy-D-manno-octulosonate biosynthesis; 3-deoxy-D-manno-octulosonate from D-ribulose 5-phosphate: step 2/3. It functions in the pathway bacterial outer membrane biogenesis; lipopolysaccharide biosynthesis. The polypeptide is 2-dehydro-3-deoxyphosphooctonate aldolase (Cyanothece sp. (strain PCC 7425 / ATCC 29141)).